The following is a 25-amino-acid chain: Xenoposin precursor fragment BM1 (25 aa).

As to expression, expressed by the skin glands.

Its subcellular location is the secreted. Its function is as follows. Antimicrobial peptide. The sequence is that of Xenoposin precursor fragment BM1 from Xenopus boumbaensis (Mawa clawed frog).